The following is a 382-amino-acid chain: D-galactonate dehydratase (382 aa).

A Mg(2+)-binding site is contributed by Asp183. Catalysis depends on His185, which acts as the Proton donor. Mg(2+)-binding residues include Glu209 and Glu235. His285 acts as the Proton acceptor in catalysis.

This sequence belongs to the mandelate racemase/muconate lactonizing enzyme family. GalD subfamily. The cofactor is Mg(2+).

The enzyme catalyses D-galactonate = 2-dehydro-3-deoxy-D-galactonate + H2O. It participates in carbohydrate acid metabolism; D-galactonate degradation; D-glyceraldehyde 3-phosphate and pyruvate from D-galactonate: step 1/3. Functionally, catalyzes the dehydration of D-galactonate to 2-keto-3-deoxy-D-galactonate. This chain is D-galactonate dehydratase, found in Salmonella dublin (strain CT_02021853).